The chain runs to 764 residues: Thyrotropin receptor (764 aa).

Residues 1–20 (MRPADLLQLVLLLDLPRDLG) form the signal peptide. The Extracellular portion of the chain corresponds to 21-413 (GMGCSSPPCE…EFNPCEDIMG (393 aa)). Cysteines 31 and 41 form a disulfide. Asn77, Asn99, and Asn113 each carry an N-linked (GlcNAc...) asparagine glycan. LRR repeat units follow at residues 100 to 124 (LSKV…ALKE), 125 to 150 (LPLL…VYST), 152 to 174 (IFFI…AFQG), 176 to 199 (CNET…AFNG), 200 to 223 (TKLD…AFGG), 227 to 248 (GPSL…GLEH), and 250 to 271 (KELI…SFLH). Asn177 and Asn198 each carry an N-linked (GlcNAc...) asparagine glycan. Asn302 carries N-linked (GlcNAc...) asparagine glycosylation. Tyr385 is modified (sulfotyrosine). A helical membrane pass occupies residues 414–441 (YKFLRIVVWFVSLLALLGNVFVLLILLT). Residues 442 to 450 (SHYKLNVPR) are Cytoplasmic-facing. The chain crosses the membrane as a helical span at residues 451 to 473 (FLMCNLAFADFCMGMYLLLIASV). At 474–494 (DLYTHSEYYNHAIDWQTGPGC) the chain is on the extracellular side. Cys494 and Cys569 form a disulfide bridge. A helical transmembrane segment spans residues 495–517 (NTAGFFTVFASELSVYTLTVITL). Topologically, residues 518–537 (ERWYAITFAMRLDRKIRLRH) are cytoplasmic. The chain crosses the membrane as a helical span at residues 538 to 560 (ACAIMVGGWVCCFLLALLPLVGI). The Extracellular segment spans residues 561–580 (SSYAKVSICLPMDTETPLAL). Residues 581 to 602 (AYIVFVLTLNIVAFVIVCCCYV) form a helical membrane-spanning segment. Residues 603–625 (KIYITVRNPQYNPGDKDTKIAKR) lie on the Cytoplasmic side of the membrane. The helical transmembrane segment at 626 to 649 (MAVLIFTDFICMAPISFYALSAIL) threads the bilayer. The Extracellular segment spans residues 650 to 660 (NKPLITVSNSK). Residues 661–682 (ILLVLFYPLNSCANPFLYAIFT) form a helical membrane-spanning segment. The Cytoplasmic portion of the chain corresponds to 683-764 (KAFQRDVFIL…ISEEYMQTVL (82 aa)). Residues 762–764 (TVL) carry the PDZ-binding motif.

Belongs to the G-protein coupled receptor 1 family. FSH/LSH/TSH subfamily. As to quaternary structure, interacts with heterodimer GPHA2:GPHB5; this interaction stimulates cAMP production. Interacts (via the PDZ-binding motif) with SCRIB; regulates TSHR trafficking and function. In terms of processing, glycosylated. Post-translationally, sulfated. Sulfation on Tyr-385 plays a role in thyrotropin receptor binding and activation. In terms of tissue distribution, expressed in thyroide cells (at protein level). Expressed in the thyroid.

The protein resides in the cell membrane. It localises to the basolateral cell membrane. In terms of biological role, receptor for the thyroid-stimulating hormone (TSH) or thyrotropin. Also acts as a receptor for the heterodimeric glycoprotein hormone (GPHA2:GPHB5) or thyrostimulin. The activity of this receptor is mediated by G proteins which activate adenylate cyclase. Plays a central role in controlling thyroid cell metabolism. The polypeptide is Thyrotropin receptor (TSHR) (Homo sapiens (Human)).